Consider the following 287-residue polypeptide: Xyloglucan endotransglucosylase protein 1 (287 aa).

Residues 1 to 28 (MAFMSFINGFSTLFLVALLASSMMAAKG) form the signal peptide. One can recognise a GH16 domain in the interval 29 to 219 (GNFYQDFDVT…WTKAPFTAYY (191 aa)). Glutamate 105 (nucleophile) is an active-site residue. Glutamate 109 acts as the Proton donor in catalysis. Glutamate 109 is a binding site for xyloglucan. Asparagine 113 is a glycosylation site (N-linked (GlcNAc...) asparagine). Residues 122-124 (HTN), 132-134 (NRE), 198-199 (DW), and glycine 203 each bind xyloglucan. 2 disulfide bridges follow: cysteine 227/cysteine 231 and cysteine 266/cysteine 280. Arginine 271 contributes to the xyloglucan binding site.

This sequence belongs to the glycosyl hydrolase 16 family. XTH group 2 subfamily. Contains at least one intrachain disulfide bond essential for its enzymatic activity. As to expression, expressed in fruit pulp. Expressed in leaves, flowers, calyces, stems and fruits. Highest expression in leaves and lowest in fruits.

It localises to the secreted. The protein resides in the cell wall. It is found in the extracellular space. Its subcellular location is the apoplast. It catalyses the reaction breaks a beta-(1-&gt;4) bond in the backbone of a xyloglucan and transfers the xyloglucanyl segment on to O-4 of the non-reducing terminal glucose residue of an acceptor, which can be a xyloglucan or an oligosaccharide of xyloglucan.. In terms of biological role, catalyzes xyloglucan endotransglycosylation (XET). Cleaves and religates xyloglucan polymers. Does not catalyze xyloglucan endohydrolysis (XEH). Overexpression in Arabidopsis transgenic plants results in elevated tolerance to abiotic stress, such as salt, ABA (abscisic acid) and drought stresses, and in the production of wider leaves. Overexpression in transgenic tomato plants slows down fruit ripening and softening, and the plants produce larger fruits. Both transgenic plants have larger and more irregular cells. Moreover, the fruits of the transgenic tomato have higher density of cell wall and intercellular spaces. May provide cells with more strength and thickness to maintain structural integrity. Probably involved in cell wall assembly and synthesis in fast growing tissues and in the maintenance of firmness in mature fruits. The chain is Xyloglucan endotransglucosylase protein 1 from Diospyros kaki (Kaki persimmon).